Here is a 145-residue protein sequence, read N- to C-terminus: UPF0260 protein VS_0923 (145 aa).

This sequence belongs to the UPF0260 family.

The sequence is that of UPF0260 protein VS_0923 from Vibrio atlanticus (strain LGP32) (Vibrio splendidus (strain Mel32)).